Here is a 424-residue protein sequence, read N- to C-terminus: Serine--tRNA ligase (424 aa).

T233–E235 contributes to the L-serine binding site. R264 to E266 provides a ligand contact to ATP. E287 is an L-serine binding site. An ATP-binding site is contributed by E351 to S354. S386 lines the L-serine pocket.

Belongs to the class-II aminoacyl-tRNA synthetase family. Type-1 seryl-tRNA synthetase subfamily. Homodimer. The tRNA molecule binds across the dimer.

It localises to the cytoplasm. The catalysed reaction is tRNA(Ser) + L-serine + ATP = L-seryl-tRNA(Ser) + AMP + diphosphate + H(+). It carries out the reaction tRNA(Sec) + L-serine + ATP = L-seryl-tRNA(Sec) + AMP + diphosphate + H(+). It participates in aminoacyl-tRNA biosynthesis; selenocysteinyl-tRNA(Sec) biosynthesis; L-seryl-tRNA(Sec) from L-serine and tRNA(Sec): step 1/1. Functionally, catalyzes the attachment of serine to tRNA(Ser). Is also able to aminoacylate tRNA(Sec) with serine, to form the misacylated tRNA L-seryl-tRNA(Sec), which will be further converted into selenocysteinyl-tRNA(Sec). This chain is Serine--tRNA ligase, found in Pseudothermotoga lettingae (strain ATCC BAA-301 / DSM 14385 / NBRC 107922 / TMO) (Thermotoga lettingae).